The sequence spans 103 residues: Putative membrane protein insertion efficiency factor (103 aa).

This sequence belongs to the UPF0161 family.

The protein localises to the cell inner membrane. In terms of biological role, could be involved in insertion of integral membrane proteins into the membrane. In Chlamydia pneumoniae (Chlamydophila pneumoniae), this protein is Putative membrane protein insertion efficiency factor.